A 408-amino-acid polypeptide reads, in one-letter code: MAQQSTKNETALLVAKSAKSALQDFNHDYSKSWTFGDKWDNSNTMFETFVNKYLFPKINETLLIDIALGNRFNWLAKEQDFIGQYSEEYVIMDTVPINMDLSKNEELMLKRNYPRMATKLYGNGIVKKQKFTLNNNDTRFNFQTLADATNYALGVYKKKISDINVLEEKEMRAMLVDYSLNQLSETNVRKATSKEDLASKVFEAILNLQNNSAKYNEVHRASGGAIGQYTTVSKLKDIVILTTDSLKSYLLDTKIANTFQIAGIDFTDHVISFDDLGGVFKVTKEFKLQNQDSIDFLRAYGDYQSQLGDTIPVGAVFTYDVSKLKEFTGNVEEIKPKSDLYAFILDINSIKYKRYTKGMLKPPFHNPEFDEVTHWIHYYSFKAISPFFNKILITDQDVNPKPEEELQE.

The protein resides in the virion. Its function is as follows. Assembles to form an icosahedral capsid. This Staphylococcus aureus protein is Major capsid protein.